An 83-amino-acid chain; its full sequence is Hepcidin-2 (83 aa).

A signal peptide spans 1–26 (MALSTRTQAACLLLLLLASLSSTTYL). The propeptide occupies 27–53 (QQQMRQTTELQPLHGEESRADIAIPMQ). Intrachain disulfides connect C65–C81, C68–C71, C69–C77, and C72–C80.

Belongs to the hepcidin family. As to expression, highly expressed in the liver and to a much lesser extent in the heart. Also expressed in pancreas.

It is found in the secreted. Seems to act as a signaling molecule involved in the maintenance of iron homeostasis. This is Hepcidin-2 (Hamp2) from Mus musculus (Mouse).